The following is a 909-amino-acid chain: Protein translocase subunit SecA (909 aa).

ATP contacts are provided by residues Gln-87, 105 to 109, and Asp-512; that span reads GEGKT. The disordered stretch occupies residues 863–909; the sequence is LVGGGDEDDESIAAHTPMIRDGDKVGRNDPCPCGSGRKYKQCHGKLS. Over residues 880–889 the composition is skewed to basic and acidic residues; sequence MIRDGDKVGR. Positions 893, 895, 904, and 905 each coordinate Zn(2+). Over residues 899-909 the composition is skewed to basic residues; the sequence is RKYKQCHGKLS.

This sequence belongs to the SecA family. As to quaternary structure, monomer and homodimer. Part of the essential Sec protein translocation apparatus which comprises SecA, SecYEG and auxiliary proteins SecDF-YajC and YidC. Zn(2+) is required as a cofactor.

It localises to the cell inner membrane. The protein localises to the cytoplasm. It catalyses the reaction ATP + H2O + cellular proteinSide 1 = ADP + phosphate + cellular proteinSide 2.. Its function is as follows. Part of the Sec protein translocase complex. Interacts with the SecYEG preprotein conducting channel. Has a central role in coupling the hydrolysis of ATP to the transfer of proteins into and across the cell membrane, serving both as a receptor for the preprotein-SecB complex and as an ATP-driven molecular motor driving the stepwise translocation of polypeptide chains across the membrane. The sequence is that of Protein translocase subunit SecA from Shewanella putrefaciens (strain CN-32 / ATCC BAA-453).